A 176-amino-acid polypeptide reads, in one-letter code: NAD(P)H-quinone oxidoreductase subunit 6, chloroplastic (176 aa).

Helical transmembrane passes span 10-30 (FLLVFLGSGIILGGLGVVLLT), 32-52 (PIFSAFSLGLVLFCISLFHIP), 60-80 (AAQLLIYVGAINVLIIFAVMF), 107-127 (IFVSLITTILDTSWYGIIWTT), and 152-172 (FFLPFELVSIILLVALIGAIA).

The protein belongs to the complex I subunit 6 family. As to quaternary structure, NDH is composed of at least 16 different subunits, 5 of which are encoded in the nucleus.

It localises to the plastid. Its subcellular location is the chloroplast thylakoid membrane. The enzyme catalyses a plastoquinone + NADH + (n+1) H(+)(in) = a plastoquinol + NAD(+) + n H(+)(out). It catalyses the reaction a plastoquinone + NADPH + (n+1) H(+)(in) = a plastoquinol + NADP(+) + n H(+)(out). NDH shuttles electrons from NAD(P)H:plastoquinone, via FMN and iron-sulfur (Fe-S) centers, to quinones in the photosynthetic chain and possibly in a chloroplast respiratory chain. The immediate electron acceptor for the enzyme in this species is believed to be plastoquinone. Couples the redox reaction to proton translocation, and thus conserves the redox energy in a proton gradient. The sequence is that of NAD(P)H-quinone oxidoreductase subunit 6, chloroplastic (ndhG) from Buxus microphylla (Littleleaf boxwood).